The primary structure comprises 632 residues: POU domain, class 2, transcription factor 1 (632 aa).

Thr157 and Thr163 each carry phosphothreonine. Residues 167 to 241 (EEPSDLEELE…LLEKWLNDAE (75 aa)) enclose the POU-specific domain. Ser170 bears the Phosphoserine mark. A compositionally biased stretch (low complexity) spans 243–258 (LSSDSTASSPSALNSP). Residues 243–273 (LSSDSTASSPSALNSPGLGAEGLNRRRKKRT) form a disordered region. Residues 268–327 (RRKKRTSIETNIRVALEKSFMENQKPTSEDITLIAEQLNMEKEVIRVWFCNRRQKEKRIN) constitute a DNA-binding region (homeobox). A phosphoserine mark is found at Ser274 and Ser337. The segment at 385–448 (GTTDSTSNNT…STPLPSPLGA (64 aa)) is disordered. Residues 394–441 (TATVISTAPPASSAVTSPSLSPSPSASASTSEASSASETSTTQTTSTP) show a composition bias toward low complexity.

It belongs to the POU transcription factor family. Class-2 subfamily. Interacts with POU2AF1; the interaction increases POU2F1 transactivation activity. Interacts with NR3C1, AR, PGR and HCFC1. In terms of processing, phosphorylated by PRKDC. As to expression, widely expressed.

The protein localises to the nucleus. Its function is as follows. Transcription factor that binds to the octamer motif (5'-ATTTGCAT-3') and activates the promoters of the genes for some small nuclear RNAs (snRNA) and of genes such as those for histone H2B and immunoglobulins. Modulates transcription transactivation by NR3C1, AR and PGR. This Rattus norvegicus (Rat) protein is POU domain, class 2, transcription factor 1 (Pou2f1).